A 447-amino-acid polypeptide reads, in one-letter code: MHTPSGPLPFYRSLYFQVITAIVIGVLLGHYWPETGTAMKPLGDGFIKLIKMIIAPIIFCTVVVGIAGMEDMKRVGKTGGLALLYFEVVSTLALLLGLLIVNLVQPGVGMHVDPATLDTKGIAAYTAPGKMQTTTEFLLAVIPTTVVDAFAKGEMLQVLLFSVMFGFALHQFGGRGTLVFDFIEKTSHVLFAIVGFIMKVAPIGAFGAMAFTIGKYGLGSLIPLAKLMGTFYATCLVFIFGVLGLIAKAHGFSIWKFIKYIKEELLIVLGTSSSESVLPRMMAKLENLGVRKSTVGLVVPTGYSFNLDGTSIYLTMAAVFIAQATDTPMTLTQQLTLLAVLLLTSKGAAGVTGSGFIVLAATLSAVGGVPVAGLALILGIDRFMSEARALTNLIGNGVATVVVGKWTGDLDEKQMRYHLDRETEAEANEPEAVLDEIDQHMPVPAAR.

The next 9 helical transmembrane spans lie at 13–33 (SLYFQVITAIVIGVLLGHYWP), 49–69 (LIKMIIAPIIFCTVVVGIAGM), 81–101 (LALLYFEVVSTLALLLGLLIV), 149–169 (AFAKGEMLQVLLFSVMFGFAL), 189–209 (VLFAIVGFIMKVAPIGAFGAM), 227–247 (LMGTFYATCLVFIFGVLGLIA), 302–322 (GYSFNLDGTSIYLTMAAVFIA), 336–356 (TLLAVLLLTSKGAAGVTGSGF), and 357–377 (IVLAATLSAVGGVPVAGLALI). The segment at 422–447 (ETEAEANEPEAVLDEIDQHMPVPAAR) is disordered. Residues 425-436 (AEANEPEAVLDE) are compositionally biased toward acidic residues.

Belongs to the dicarboxylate/amino acid:cation symporter (DAACS) (TC 2.A.23) family.

The protein resides in the cell inner membrane. Responsible for the transport of dicarboxylates such as succinate, fumarate, and malate from the periplasm across the membrane. In Leptothrix cholodnii (strain ATCC 51168 / LMG 8142 / SP-6) (Leptothrix discophora (strain SP-6)), this protein is C4-dicarboxylate transport protein.